The primary structure comprises 497 residues: Cytochrome P450 3A18 (497 aa).

Cys-442 is a binding site for heme.

The protein belongs to the cytochrome P450 family. It depends on heme as a cofactor.

The protein resides in the endoplasmic reticulum membrane. It is found in the microsome membrane. It carries out the reaction an organic molecule + reduced [NADPH--hemoprotein reductase] + O2 = an alcohol + oxidized [NADPH--hemoprotein reductase] + H2O + H(+). In terms of biological role, catalyzes 16-beta- and 6-alpha-hydroxylations of testosterone. In Rattus norvegicus (Rat), this protein is Cytochrome P450 3A18 (Cyp3a18).